Here is a 760-residue protein sequence, read N- to C-terminus: Ring-infected erythrocyte surface antigen (760 aa).

Residues 214 to 300 (DTSQEESVEE…SDVQQTSEAA (87 aa)) form a disordered region. The span at 216–230 (SQEESVEENEEEHTV) shows a compositional bias: acidic residues. A compositionally biased stretch (basic and acidic residues) spans 231 to 242 (DDEHVEEHTADD). Acidic residues predominate over residues 243–256 (EHVEEPTVADDEHV). The span at 262–288 (ADEHVEEPTVAEEHVEEPTVAEEHVEE) shows a compositional bias: basic and acidic residues. Residues 307-375 (DTLYYDILGV…KRWYNKYGYD (69 aa)) enclose the J domain. N-linked (GlcNAc...) asparagine glycosylation is found at Asn425, Asn559, and Asn563. Positions 683–692 (EHDAEENVEH) are enriched in basic and acidic residues. Positions 683-738 (EHDAEENVEHDAEENAEENVEENVEEVEENVEENVEENVGEKKMRREEKKKRVQEP) are disordered. The span at 693-720 (DAEENAEENVEENVEEVEENVEENVEEN) shows a compositional bias: acidic residues.

It is found in the cell membrane. Functionally, may disrupt the normal intermolecular interactions of the cytoplasmic domain of band 3 and thereby facilitate the invagination of the red cell membrane which is necessary for the formation of the parasitophorous vacuole. This Plasmodium falciparum (isolate NF7 / Ghana) protein is Ring-infected erythrocyte surface antigen (RESA).